Here is a 414-residue protein sequence, read N- to C-terminus: MSYYDTIFNKHIDKIKSEGRYREFKSLKRQADNFPFAEYEDKQIVMWCINDYLGMSKHIKVMQASIDALLEYGVGSGGTRNIGGNNISILELEKELADLHSKETALVFTSGFVANDTTLASLAKIIPDIVFFSDELNHASIIAGITSSRAEKYVYRHLDVQHLEKLLQSVDINKPKIIVFESAYSMDGFFSPIKDIINLAKKYNALTFIDEVHTVGLYGKQGGGISELLDCSNQIDIIQGTLAKAYGTIGGYITSNYNLIDAIRLTAPGFIFTTSLPPVISTAATHSIRHLKVSNEERIKHQEVVTKLKNSFEHFNIPYLKNESHIIPIIIGDPIKATKVSNMLLNEYGIYVQHINFPTVPRGTERLRIIPTPAHTDKMINDLSTALVHIFAELDIELSSTKELNKEVRLHLIA.

Residues Arg-22, Ser-133, and Lys-152 each contribute to the substrate site. The pyridoxal 5'-phosphate site is built by Ser-185, His-213, and Thr-241. Residue Lys-244 is part of the active site. The residue at position 244 (Lys-244) is an N6-(pyridoxal phosphate)lysine. Pyridoxal 5'-phosphate is bound by residues Thr-273 and Thr-274. Thr-359 lines the substrate pocket.

The protein belongs to the class-II pyridoxal-phosphate-dependent aminotransferase family. Homodimer. It depends on pyridoxal 5'-phosphate as a cofactor.

It catalyses the reaction succinyl-CoA + glycine + H(+) = 5-aminolevulinate + CO2 + CoA. The protein operates within porphyrin-containing compound metabolism; protoporphyrin-IX biosynthesis; 5-aminolevulinate from glycine: step 1/1. This chain is 5-aminolevulinate synthase (hemA), found in Rickettsia typhi (strain ATCC VR-144 / Wilmington).